The following is a 416-amino-acid chain: Homeobox protein ceh-62 (416 aa).

Residues 103–113 show a composition bias toward low complexity; that stretch reads TPTPIIATPSI. Disordered regions lie at residues 103–144 and 178–247; these read TPTP…QATR and FQNR…FPPT. Residues 118–127 show a composition bias toward polar residues; sequence QPLQSPSAPN. Residues 130-189 constitute a DNA-binding region (homeobox); the sequence is SRRKRTTFSPEQATRLEAEYIGDSYMAREKRHLLAQSLKLSENQVKTWFQNRRAKDKRDR. Over residues 193-218 the composition is skewed to low complexity; sequence NASNHTSNSRRSSPSRKSSSDSTPTP. The span at 219–240 shows a compositional bias: polar residues; the sequence is TQATQFDMPTQIQTASPPTTAD.

The protein resides in the nucleus. The sequence is that of Homeobox protein ceh-62 from Caenorhabditis elegans.